The primary structure comprises 185 residues: Ribosome-recycling factor (185 aa).

It belongs to the RRF family.

It localises to the cytoplasm. In terms of biological role, responsible for the release of ribosomes from messenger RNA at the termination of protein biosynthesis. May increase the efficiency of translation by recycling ribosomes from one round of translation to another. The chain is Ribosome-recycling factor from Halothermothrix orenii (strain H 168 / OCM 544 / DSM 9562).